We begin with the raw amino-acid sequence, 65 residues long: NADH dehydrogenase [ubiquinone] 1 alpha subcomplex subunit 1 (65 aa).

The helical transmembrane segment at 3–23 threads the bilayer; sequence LVWLEAMLPLGIIGGMLCIMG.

This sequence belongs to the complex I NDUFA1 subunit family. As to quaternary structure, complex I is composed of at least 49 different subunits.

It is found in the mitochondrion inner membrane. In terms of biological role, accessory subunit of the mitochondrial membrane respiratory chain NADH dehydrogenase (Complex I), that is believed not to be involved in catalysis. Complex I functions in the transfer of electrons from NADH to the respiratory chain. The immediate electron acceptor for the enzyme is believed to be ubiquinone. The chain is NADH dehydrogenase [ubiquinone] 1 alpha subcomplex subunit 1 from Arabidopsis thaliana (Mouse-ear cress).